Here is a 91-residue protein sequence, read N- to C-terminus: MKLTITLALVTLALLCSPASAGICPGFAHVIENLLLGTPSSYETSLKEFQPDDAMKDAGMQMKKVLDTLPQTTRENIIKLTEKIVKSPLCM.

Residues 1–21 form the signal peptide; the sequence is MKLTITLALVTLALLCSPASA.

Belongs to the secretoglobin family. In terms of assembly, antiparallel homodimer; disulfide-linked. Interaction with LMBR1L is controversial.

The protein localises to the secreted. Functionally, uteroglobin binds progesterone specifically and with high affinity. It may regulate progesterone concentrations reaching the blastocyst. It is also a potent inhibitor of phospholipase A2. This is Uteroglobin (SCGB1A1) from Lepus capensis (Brown hare).